The sequence spans 274 residues: Large ribosomal subunit protein uL2cz/uL2cy (274 aa).

The disordered stretch occupies residues 224–253; it reads NPIDHPHGGGEGRAPIGRKKPTTPWGYPAL.

The protein belongs to the universal ribosomal protein uL2 family. Part of the 50S ribosomal subunit.

It localises to the plastid. The chain is Large ribosomal subunit protein uL2cz/uL2cy (rpl2-A) from Epifagus virginiana (Beechdrops).